A 267-amino-acid polypeptide reads, in one-letter code: Hydroxyethylthiazole kinase (267 aa).

Methionine 46 lines the substrate pocket. 2 residues coordinate ATP: arginine 121 and threonine 167. Residue alanine 194 coordinates substrate.

The protein belongs to the Thz kinase family. Mg(2+) is required as a cofactor.

The enzyme catalyses 5-(2-hydroxyethyl)-4-methylthiazole + ATP = 4-methyl-5-(2-phosphooxyethyl)-thiazole + ADP + H(+). Its pathway is cofactor biosynthesis; thiamine diphosphate biosynthesis; 4-methyl-5-(2-phosphoethyl)-thiazole from 5-(2-hydroxyethyl)-4-methylthiazole: step 1/1. Its function is as follows. Catalyzes the phosphorylation of the hydroxyl group of 4-methyl-5-beta-hydroxyethylthiazole (THZ). The protein is Hydroxyethylthiazole kinase of Rhizobium johnstonii (strain DSM 114642 / LMG 32736 / 3841) (Rhizobium leguminosarum bv. viciae).